The primary structure comprises 1399 residues: DNA-directed RNA polymerase subunit beta' (1399 aa).

Zn(2+) is bound by residues Cys-71, Cys-73, Cys-86, and Cys-89. Mg(2+) is bound by residues Asp-462, Asp-464, and Asp-466. 4 residues coordinate Zn(2+): Cys-810, Cys-884, Cys-891, and Cys-894. The tract at residues 1376–1399 (EREKQAAITPAAPEAEPLALPPAE) is disordered.

It belongs to the RNA polymerase beta' chain family. In terms of assembly, the RNAP catalytic core consists of 2 alpha, 1 beta, 1 beta' and 1 omega subunit. When a sigma factor is associated with the core the holoenzyme is formed, which can initiate transcription. It depends on Mg(2+) as a cofactor. Zn(2+) serves as cofactor.

It catalyses the reaction RNA(n) + a ribonucleoside 5'-triphosphate = RNA(n+1) + diphosphate. DNA-dependent RNA polymerase catalyzes the transcription of DNA into RNA using the four ribonucleoside triphosphates as substrates. In Afipia carboxidovorans (strain ATCC 49405 / DSM 1227 / KCTC 32145 / OM5) (Oligotropha carboxidovorans), this protein is DNA-directed RNA polymerase subunit beta'.